The following is a 361-amino-acid chain: tRNA 2-selenouridine synthase (361 aa).

Positions 12 to 135 (VLKNIPLIDV…FRRYLIDHLE (124 aa)) constitute a Rhodanese domain. Cys-95 (S-selanylcysteine intermediate) is an active-site residue.

It belongs to the SelU family. In terms of assembly, monomer.

It carries out the reaction 5-methylaminomethyl-2-thiouridine(34) in tRNA + selenophosphate + (2E)-geranyl diphosphate + H2O + H(+) = 5-methylaminomethyl-2-selenouridine(34) in tRNA + (2E)-thiogeraniol + phosphate + diphosphate. The enzyme catalyses 5-methylaminomethyl-2-thiouridine(34) in tRNA + (2E)-geranyl diphosphate = 5-methylaminomethyl-S-(2E)-geranyl-thiouridine(34) in tRNA + diphosphate. The catalysed reaction is 5-methylaminomethyl-S-(2E)-geranyl-thiouridine(34) in tRNA + selenophosphate + H(+) = 5-methylaminomethyl-2-(Se-phospho)selenouridine(34) in tRNA + (2E)-thiogeraniol. It catalyses the reaction 5-methylaminomethyl-2-(Se-phospho)selenouridine(34) in tRNA + H2O = 5-methylaminomethyl-2-selenouridine(34) in tRNA + phosphate. Involved in the post-transcriptional modification of the uridine at the wobble position (U34) of tRNA(Lys), tRNA(Glu) and tRNA(Gln). Catalyzes the conversion of 2-thiouridine (S2U-RNA) to 2-selenouridine (Se2U-RNA). Acts in a two-step process involving geranylation of 2-thiouridine (S2U) to S-geranyl-2-thiouridine (geS2U) and subsequent selenation of the latter derivative to 2-selenouridine (Se2U) in the tRNA chain. This is tRNA 2-selenouridine synthase from Hydrogenovibrio crunogenus (strain DSM 25203 / XCL-2) (Thiomicrospira crunogena).